The following is a 1369-amino-acid chain: ATP-dependent RNA helicase DHX29 (1369 aa).

Disordered regions lie at residues 27–75 and 176–226; these read SAEA…TNDS and SQEF…KNME. Residues Ser-71, Ser-192, and Ser-200 each carry the phosphoserine modification. Over residues 189–201 the composition is skewed to polar residues; it reads KFQSPQIQATISP. The segment covering 208–226 has biased composition (basic and acidic residues); sequence KTYEEDPKSKPKKEEKNME. Coiled coils occupy residues 222 to 256, 283 to 310, and 492 to 519; these read EKNMEVNMKEWILRYAEQQNEEEKNENSKSLEEEE, LEKNKQGQKEAQEKIRKFQREMETLEDH, and IAKLLNKLKQQQQQQQQHSENKRENSED. Positions 502 to 526 are disordered; it reads QQQQQQQHSENKRENSEDPEESWEN. The Helicase ATP-binding domain occupies 582–755; the sequence is VETLKRHRVV…FTHCPILRIS (174 aa). 595 to 602 is a binding site for ATP; the sequence is GETGSGKS. The DEAH box signature appears at 702 to 705; the sequence is DEVH. The Helicase C-terminal domain maps to 849-1026; it reads LILELLAYLD…ELCLHIMKCN (178 aa).

Belongs to the DEAD box helicase family. DEAH subfamily. As to quaternary structure, part of the 43S pre-initiation complex (PIC) that contains at least Met-tRNA, EIF1, EIF1A (EIF1AX or EIF1AY), EIF2S1, EIF2S2, EIF2S3, EIF3A, EIF3B, EIF3C, EIF3D, EIF3E, EIF3F, EIF3G, EIF3H, EIF3I, EIF3J, EIF3K, EIF3L, EIF3M, DHX29 and the 40S ribosomal subunit.

It localises to the cytoplasm. It catalyses the reaction ATP + H2O = ADP + phosphate + H(+). Functionally, ATP-binding RNA helicase involved in translation initiation. Part of the 43S pre-initiation complex that is required for efficient initiation on mRNAs of higher eukaryotes with structured 5'-UTRs by promoting efficient NTPase-dependent 48S complex formation. Specifically binds to the 40S ribosome near the mRNA entrance. Does not possess a processive helicase activity. In Homo sapiens (Human), this protein is ATP-dependent RNA helicase DHX29.